Reading from the N-terminus, the 424-residue chain is Tyrosine--tRNA ligase (424 aa).

Position 37 (Y37) interacts with L-tyrosine. The short motif at 42–51 (PTADSLHLGH) is the 'HIGH' region element. The L-tyrosine site is built by Y175 and Q179. The 'KMSKS' region signature appears at 235–239 (KFGKT). K238 contacts ATP. Positions 357–414 (ADLQQALVNAELVPSRGQARTMIGSNAVAINGEKQADPEYVFTDADRLFGRYTLLRRG) constitute an S4 RNA-binding domain.

It belongs to the class-I aminoacyl-tRNA synthetase family. TyrS type 1 subfamily. As to quaternary structure, homodimer.

Its subcellular location is the cytoplasm. It carries out the reaction tRNA(Tyr) + L-tyrosine + ATP = L-tyrosyl-tRNA(Tyr) + AMP + diphosphate + H(+). Functionally, catalyzes the attachment of tyrosine to tRNA(Tyr) in a two-step reaction: tyrosine is first activated by ATP to form Tyr-AMP and then transferred to the acceptor end of tRNA(Tyr). The protein is Tyrosine--tRNA ligase of Yersinia pseudotuberculosis serotype O:1b (strain IP 31758).